A 172-amino-acid chain; its full sequence is Protein LOL2 (172 aa).

3 putative zinc finger regions span residues 4 to 34 (QIVC…VSST), 44 to 74 (HLIC…VNLV), and 82 to 112 (HLNC…ITNT).

The protein localises to the nucleus. Its function is as follows. Putative zinc finger that may be involved in programmed cell death and defense response. The protein is Protein LOL2 (LOL2) of Oryza sativa subsp. japonica (Rice).